A 134-amino-acid chain; its full sequence is Small ribosomal subunit protein bS16 (134 aa).

The tract at residues Leu81 to Ser134 is disordered. Over residues Lys91–Glu101 the composition is skewed to basic and acidic residues. Residues Ala116–Ser134 show a composition bias toward low complexity.

Belongs to the bacterial ribosomal protein bS16 family.

This chain is Small ribosomal subunit protein bS16, found in Chelativorans sp. (strain BNC1).